Here is a 383-residue protein sequence, read N- to C-terminus: Aliphatic nitrilase (383 aa).

Residues 13–288 enclose the CN hydrolase domain; the sequence is VKVATVQAEP…EGLLYAELDL (276 aa). Residue E53 is the Proton acceptor of the active site. K136 serves as the catalytic Proton donor. The Nucleophile role is filled by C170. The segment at 359 to 383 is disordered; that stretch reads ATLPLDAPAPAPAPEQKSGRAKAEA.

This sequence belongs to the carbon-nitrogen hydrolase superfamily. Nitrilase family.

The catalysed reaction is an aliphatic nitrile + 2 H2O = a carboxylate + NH4(+). Acts on aliphatic nitriles such as acrylonitrile, crotononitrile and glutaronitrile. In Rhodococcus rhodochrous, this protein is Aliphatic nitrilase.